Here is a 747-residue protein sequence, read N- to C-terminus: MGISDKVNKLFNFICKNDVVSVRKYLEKGINPNEKNKDNCTMLYTAVEHRYIDIIKLLLDHGADPNIYSSDHMTPLHSVSVIIPIRKISKLITKYGNLVTLANYRNTFFVYNENRNLEIAKMLIQNGALVNMNNMKNITPLHIASSSGSYKMVELLLLHGANTNALTSYGETSLHYSVSSNDLNISELLIENGTNVNVANKDSITALIIAVEIMSIDLVRLLLDKGADTNAIGLERFKLYVTETKQNNNILKYLNTNNVNTNVTMINEYIASELYDWNRNSATSKLMFRSCFEPCTVPVTLATRKGSKELLEILLEYGCNPDICEKTTSTYAMHYAVIRKHYEMLNILIRYDAYTDVKDRQQNTPAHYAVKLPISESCKYLKLLKLAGASFNLTNRKGRTPLHTACKYNNTEAVKYLIESGCDTNIVDVMSFTPLNYAVYYEREDTVKILLESGCVDPNLCDYKEVSPIIQAIKRNNKNIIKMLLNAGIDIKPINECYGLHMLAALHNKDLLKWLLCTISELEVNGVDDHYVPLASYVAELSDIRIMEILIEKGLDLNKVTGPDETMFTMIFSATSDLRKSIIDLLISQIAADEEFSEGFKINKNMIQTDKYLLRVYHECKNQVSKMGEIKLGDGFTMIDIYKNRRSIHVNFLARYAMQLSTIDLREVPIYRKYLEILINPAIKRHKILNAAKDTMNNILHRKEKFYWNLLPVEIKFNILEYLNSKDLISLIHSNTVNEIDLSHIFI.

ANK repeat units follow at residues 38–67, 103–132, 136–165, 169–198, 202–231, 234–263, 294–323, 328–357, 361–393, 397–426, 430–460, 464–493, 495–524, and 529–559; these read DNCT…DPNI, NYRN…LVNM, KNIT…NTNA, YGET…NVNV, DSIT…DTNA, LERF…NTNV, PCTV…NPDI, TSTY…YTDV, QQNT…SFNL, KGRT…DTNI, MSFT…DPNL, KEVS…DIKP, NECY…ELEV, and DHYV…DLNK.

This Vertebrata (FPV) protein is Putative ankyrin repeat protein FPV222.